Here is a 454-residue protein sequence, read N- to C-terminus: Bifunctional protein GlmU (454 aa).

The interval 1-225 (MNIVILAAGM…VWETLGVNSK (225 aa)) is pyrophosphorylase. UDP-N-acetyl-alpha-D-glucosamine is bound by residues 6 to 9 (LAAG), Lys20, Gln71, 76 to 77 (GT), 98 to 100 (YGD), Gly135, Glu150, Asn165, and Asn223. Position 100 (Asp100) interacts with Mg(2+). Asn223 contributes to the Mg(2+) binding site. The interval 226–246 (LQLAEVERIHQGNQARRLLEA) is linker. The N-acetyltransferase stretch occupies residues 247 to 454 (GVTLLDPARI…WQRPVKQPKQ (208 aa)). UDP-N-acetyl-alpha-D-glucosamine contacts are provided by Arg329 and Lys347. His359 functions as the Proton acceptor in the catalytic mechanism. The UDP-N-acetyl-alpha-D-glucosamine site is built by Tyr362 and Asn373. Residues Ala376, 382-383 (NY), Ser401, Ala419, and Arg436 contribute to the acetyl-CoA site.

It in the N-terminal section; belongs to the N-acetylglucosamine-1-phosphate uridyltransferase family. The protein in the C-terminal section; belongs to the transferase hexapeptide repeat family. In terms of assembly, homotrimer. Mg(2+) serves as cofactor.

It localises to the cytoplasm. The catalysed reaction is alpha-D-glucosamine 1-phosphate + acetyl-CoA = N-acetyl-alpha-D-glucosamine 1-phosphate + CoA + H(+). The enzyme catalyses N-acetyl-alpha-D-glucosamine 1-phosphate + UTP + H(+) = UDP-N-acetyl-alpha-D-glucosamine + diphosphate. Its pathway is nucleotide-sugar biosynthesis; UDP-N-acetyl-alpha-D-glucosamine biosynthesis; N-acetyl-alpha-D-glucosamine 1-phosphate from alpha-D-glucosamine 6-phosphate (route II): step 2/2. It participates in nucleotide-sugar biosynthesis; UDP-N-acetyl-alpha-D-glucosamine biosynthesis; UDP-N-acetyl-alpha-D-glucosamine from N-acetyl-alpha-D-glucosamine 1-phosphate: step 1/1. The protein operates within bacterial outer membrane biogenesis; LPS lipid A biosynthesis. Its function is as follows. Catalyzes the last two sequential reactions in the de novo biosynthetic pathway for UDP-N-acetylglucosamine (UDP-GlcNAc). The C-terminal domain catalyzes the transfer of acetyl group from acetyl coenzyme A to glucosamine-1-phosphate (GlcN-1-P) to produce N-acetylglucosamine-1-phosphate (GlcNAc-1-P), which is converted into UDP-GlcNAc by the transfer of uridine 5-monophosphate (from uridine 5-triphosphate), a reaction catalyzed by the N-terminal domain. The protein is Bifunctional protein GlmU of Cupriavidus taiwanensis (strain DSM 17343 / BCRC 17206 / CCUG 44338 / CIP 107171 / LMG 19424 / R1) (Ralstonia taiwanensis (strain LMG 19424)).